The sequence spans 379 residues: Cytochrome b (379 aa).

The next 4 helical transmembrane spans lie at 33–53 (FGSL…FLAM), 77–98 (WLIR…FIHV), 113–133 (WNIG…GYVL), and 178–198 (FFAF…VHLL). H83 and H97 together coordinate heme b. 2 residues coordinate heme b: H182 and H196. Residue H201 participates in a ubiquinone binding. 4 helical membrane-spanning segments follow: residues 226-246 (TKDL…ALFF), 288-308 (LGGV…PLLN), 320-340 (VTQV…WIGG), and 347-367 (FTMI…ILIP).

The protein belongs to the cytochrome b family. The cytochrome bc1 complex contains 11 subunits: 3 respiratory subunits (MT-CYB, CYC1 and UQCRFS1), 2 core proteins (UQCRC1 and UQCRC2) and 6 low-molecular weight proteins (UQCRH/QCR6, UQCRB/QCR7, UQCRQ/QCR8, UQCR10/QCR9, UQCR11/QCR10 and a cleavage product of UQCRFS1). This cytochrome bc1 complex then forms a dimer. Requires heme b as cofactor.

It localises to the mitochondrion inner membrane. In terms of biological role, component of the ubiquinol-cytochrome c reductase complex (complex III or cytochrome b-c1 complex) that is part of the mitochondrial respiratory chain. The b-c1 complex mediates electron transfer from ubiquinol to cytochrome c. Contributes to the generation of a proton gradient across the mitochondrial membrane that is then used for ATP synthesis. The protein is Cytochrome b (MT-CYB) of Akodon lutescens puer (Altiplano grass mouse).